A 569-amino-acid chain; its full sequence is Thiol:disulfide interchange protein DsbD (569 aa).

Residues 1–19 (MAQRILTLILLLCSTSAFA) form the signal peptide. 2 disulfide bridges follow: C122/C128 and C187/C309. Transmembrane regions (helical) follow at residues 168 to 188 (LPFS…TPCV), 213 to 233 (LLTF…GLVV), 248 to 268 (YVLI…FGLF), 301 to 321 (IAGL…LLYI), 328 to 348 (WLGG…LILI), 362 to 382 (WMEH…VFLL), and 391 to 411 (GLRL…ITSL). The 140-residue stretch at 430–569 (LVSVRPLQDW…FSAHLRDRQP (140 aa)) folds into the Thioredoxin domain. A disulfide bridge links C484 with C487.

The protein belongs to the thioredoxin family. DsbD subfamily.

Its subcellular location is the cell inner membrane. The catalysed reaction is [protein]-dithiol + NAD(+) = [protein]-disulfide + NADH + H(+). It catalyses the reaction [protein]-dithiol + NADP(+) = [protein]-disulfide + NADPH + H(+). Functionally, required to facilitate the formation of correct disulfide bonds in some periplasmic proteins and for the assembly of the periplasmic c-type cytochromes. Acts by transferring electrons from cytoplasmic thioredoxin to the periplasm. This transfer involves a cascade of disulfide bond formation and reduction steps. The chain is Thiol:disulfide interchange protein DsbD from Citrobacter koseri (strain ATCC BAA-895 / CDC 4225-83 / SGSC4696).